The sequence spans 65 residues: Translational regulator CsrA (65 aa).

The protein belongs to the CsrA/RsmA family. As to quaternary structure, homodimer; the beta-strands of each monomer intercalate to form a hydrophobic core, while the alpha-helices form wings that extend away from the core.

It is found in the cytoplasm. Its function is as follows. A key translational regulator that binds mRNA to regulate translation initiation and/or mRNA stability. Mediates global changes in gene expression, shifting from rapid growth to stress survival by linking envelope stress, the stringent response and the catabolite repression systems. Usually binds in the 5'-UTR; binding at or near the Shine-Dalgarno sequence prevents ribosome-binding, repressing translation, binding elsewhere in the 5'-UTR can activate translation and/or stabilize the mRNA. Its function is antagonized by small RNA(s). The polypeptide is Translational regulator CsrA (Pseudomonas putida (strain ATCC 47054 / DSM 6125 / CFBP 8728 / NCIMB 11950 / KT2440)).